The chain runs to 418 residues: Nickel and cobalt resistance protein CnrC (418 aa).

An N-terminal signal peptide occupies residues 1–29 (MKQVISSFLCRPRFVGSAIWLLPVALSHA).

This sequence belongs to the outer membrane factor (OMF) (TC 1.B.17) family.

In terms of biological role, the products of the genes cnrA, cnrB, and cnrC are likely to form a membrane-bound protein complex catalyzing an energy-dependent efflux of Ni(2+) and Co(2+). The mechanism of action of the CnrCBA complex may be that of a proton/cation antiporter. This Cupriavidus metallidurans (strain ATCC 43123 / DSM 2839 / NBRC 102507 / CH34) (Ralstonia metallidurans) protein is Nickel and cobalt resistance protein CnrC (cnrC).